Here is a 261-residue protein sequence, read N- to C-terminus: tRNA pseudouridine synthase A (261 aa).

D51 serves as the catalytic Nucleophile. Residue Y109 coordinates substrate.

This sequence belongs to the tRNA pseudouridine synthase TruA family. Homodimer.

The catalysed reaction is uridine(38/39/40) in tRNA = pseudouridine(38/39/40) in tRNA. Functionally, formation of pseudouridine at positions 38, 39 and 40 in the anticodon stem and loop of transfer RNAs. The protein is tRNA pseudouridine synthase A of Shewanella baltica (strain OS223).